A 650-amino-acid polypeptide reads, in one-letter code: MSEAHIYPVKENIKAHTHADNDTYLAMYQQSVTDPEGFWSEHGKIVDWIKPFTKVKQTSFDTGHVDIRWFEDGTLNVSANCIDRHLAERGDDVAIIWEGDNPADDKTLTYNELYTEVCRFSNALKEQGVRKGDVVCLYMPMVPEAAVAMLACTRIGAVHTIVFGGFSPEALAGRIIDSDAKVVITADEGVRGGRAVPLKKNVDEALTNPEVKTISKVVVFKRTGGNIDWHEHRDVWWHEATAKVSDVCPPEEMKAEDPLFILYTSGSTGKPKGVLHTTGGYLVYATMTFKYVFDYQPGETFWCTADVGWITGHTYLVYGPLANGAKTILFEGVPNYPNTSRMSEVVDKHQVNILYTAPTAIRALMAKGNEAIEGTDRSSLRIMGSVGEPINPEAWEWYYKTIGNEKSPIVDTWWQTETGGILITPLPGATALKPGSATRPFFGVQPALVDNMGNVIEDQAAEGNLVILDSWPGQMRTVYGDHERFEQTYFSTFKGMYFTGDGARRDEDGYYWITGRVDDVLNVSGHRMGTAEIESALVAHPKIAEAAIVGIPHDIKGQAIYAYVTLNAGEYPTAELHKEVKDWVRKEIGPIATPDVLHWTDALPKTRSGKIMRRILRKIATGDTSNLGDTSTLADPSVVDKLIAEKAELV.

CoA is bound by residues 191 to 194 (RGGR), Thr311, and Asn335. ATP-binding positions include 387-389 (GEP), 411-416 (DTWWQT), Asp501, and Arg516. A CoA-binding site is contributed by Ser524. Arg527 is an ATP binding site. Positions 538, 540, and 543 each coordinate Mg(2+). Arg585 contacts CoA. Residue Lys610 is modified to N6-acetyllysine.

It belongs to the ATP-dependent AMP-binding enzyme family. It depends on Mg(2+) as a cofactor. Acetylated. Deacetylation by the SIR2-homolog deacetylase activates the enzyme.

It carries out the reaction acetate + ATP + CoA = acetyl-CoA + AMP + diphosphate. Catalyzes the conversion of acetate into acetyl-CoA (AcCoA), an essential intermediate at the junction of anabolic and catabolic pathways. AcsA undergoes a two-step reaction. In the first half reaction, AcsA combines acetate with ATP to form acetyl-adenylate (AcAMP) intermediate. In the second half reaction, it can then transfer the acetyl group from AcAMP to the sulfhydryl group of CoA, forming the product AcCoA. The polypeptide is Acetyl-coenzyme A synthetase (Vibrio vulnificus (strain YJ016)).